A 386-amino-acid polypeptide reads, in one-letter code: Caspase-1-A (386 aa).

The propeptide occupies 1–100; sequence MTAQLNKVRR…PPMAPVPIQE (100 aa). One can recognise a CARD domain in the interval 22 to 88; it reads SDLLDDLREK…HKTLAKSLGL (67 aa). Active-site residues include histidine 218 and cysteine 274. Residues 287-296 constitute a propeptide that is removed on maturation; the sequence is DVASPPLEDD.

The protein belongs to the peptidase C14A family. Heterotetramer that consists of two anti-parallel arranged heterodimers, each one formed by a 20 kDa (Caspase-1 subunit p20) and a 10 kDa (Caspase-1 subunit p10) subunit. As to quaternary structure, heterotetramer that consists of two anti-parallel arranged heterodimers, each one formed by a 20 kDa (Caspase-1 subunit p20) and a 10 kDa (Caspase-1 subunit p10) subunit. Can form a heterodimer with isoform epsilon which then has an inhibitory effect. The two subunits are derived from the precursor sequence by an autocatalytic mechanism.

The protein localises to the cytoplasm. It localises to the cell membrane. It catalyses the reaction Strict requirement for an Asp residue at position P1 and has a preferred cleavage sequence of Tyr-Val-Ala-Asp-|-.. In terms of biological role, thiol protease involved in a variety of inflammatory processes by proteolytically cleaving other proteins, such as the precursors of the inflammatory cytokines interleukin-1 beta (IL1B) and interleukin 18 (IL18) as well as the pyroptosis inducer Gasdermin-D (GSDMD), into active mature peptides. Plays a key role in cell immunity as an inflammatory response initiator: once activated through formation of an inflammasome complex, it initiates a pro-inflammatory response through the cleavage of the two inflammatory cytokines IL1B and IL18, releasing the mature cytokines which are involved in a variety of inflammatory processes. Cleaves a tetrapeptide after an Asp residue at position P1. Also initiates pyroptosis, a programmed lytic cell death pathway, through cleavage of GSDMD. The sequence is that of Caspase-1-A (casp1-a) from Xenopus laevis (African clawed frog).